The primary structure comprises 465 residues: Glutamate--tRNA ligase (465 aa).

Positions 11–21 (PSPTGYLHIGG) match the 'HIGH' region motif. Positions 243–247 (KLSKR) match the 'KMSKS' region motif. Lys-246 contacts ATP.

Belongs to the class-I aminoacyl-tRNA synthetase family. Glutamate--tRNA ligase type 1 subfamily. As to quaternary structure, monomer.

The protein localises to the cytoplasm. The catalysed reaction is tRNA(Glu) + L-glutamate + ATP = L-glutamyl-tRNA(Glu) + AMP + diphosphate. Functionally, catalyzes the attachment of glutamate to tRNA(Glu) in a two-step reaction: glutamate is first activated by ATP to form Glu-AMP and then transferred to the acceptor end of tRNA(Glu). In Aromatoleum aromaticum (strain DSM 19018 / LMG 30748 / EbN1) (Azoarcus sp. (strain EbN1)), this protein is Glutamate--tRNA ligase.